The primary structure comprises 421 residues: Histidine--tRNA ligase (421 aa).

The protein belongs to the class-II aminoacyl-tRNA synthetase family. As to quaternary structure, homodimer.

Its subcellular location is the cytoplasm. It catalyses the reaction tRNA(His) + L-histidine + ATP = L-histidyl-tRNA(His) + AMP + diphosphate + H(+). The chain is Histidine--tRNA ligase from Nitrosomonas eutropha (strain DSM 101675 / C91 / Nm57).